A 483-amino-acid polypeptide reads, in one-letter code: V-type proton ATPase subunit H (483 aa).

Serine 483 is modified (phosphoserine).

It belongs to the V-ATPase H subunit family. As to quaternary structure, V-ATPase is a heteromultimeric enzyme made up of two complexes: the ATP-hydrolytic V1 complex and the proton translocation V0 complex. The V1 complex consists of three catalytic AB heterodimers that form a heterohexamer, three peripheral stalks each consisting of EG heterodimers, one central rotor including subunits D and F, and the regulatory subunits C and H. The proton translocation complex V0 consists of the proton transport subunit a, a ring of proteolipid subunits c9c'', rotary subunit d, subunits e and f, and the accessory subunits ATP6AP1/Ac45 and ATP6AP2/PRR. Interacts with AP2M1.

It is found in the cytoplasmic vesicle. Its subcellular location is the clathrin-coated vesicle membrane. Functionally, subunit of the V1 complex of vacuolar(H+)-ATPase (V-ATPase), a multisubunit enzyme composed of a peripheral complex (V1) that hydrolyzes ATP and a membrane integral complex (V0) that translocates protons. V-ATPase is responsible for acidifying and maintaining the pH of intracellular compartments and in some cell types, is targeted to the plasma membrane, where it is responsible for acidifying the extracellular environment. Subunit H is essential for V-ATPase activity, but not for the assembly of the complex. Involved in the endocytosis mediated by clathrin-coated pits, required for the formation of endosomes. This Sus scrofa (Pig) protein is V-type proton ATPase subunit H (ATP6V1H).